We begin with the raw amino-acid sequence, 127 residues long: Fluoride-specific ion channel FluC (127 aa).

4 helical membrane passes run 4–24 (LDYLTIAFGGAIGAVLRYLVS), 39–59 (GTIIVNSVGSFFLSFLMFAAI), 68–88 (AILFFGTGLLGAFTTFSTFTY), and 102–122 (VAYALVNLLFAFTCAYFGMIL). G78 and T81 together coordinate Na(+).

Belongs to the fluoride channel Fluc/FEX (TC 1.A.43) family.

The protein localises to the cell inner membrane. It catalyses the reaction fluoride(in) = fluoride(out). With respect to regulation, na(+) is not transported, but it plays an essential structural role and its presence is essential for fluoride channel function. Fluoride-specific ion channel. Important for reducing fluoride concentration in the cell, thus reducing its toxicity. The polypeptide is Fluoride-specific ion channel FluC (Thermotoga petrophila (strain ATCC BAA-488 / DSM 13995 / JCM 10881 / RKU-1)).